Reading from the N-terminus, the 257-residue chain is Triosephosphate isomerase (257 aa).

9 to 11 is a binding site for substrate; the sequence is NWK. The Electrophile role is filled by H95. The active-site Proton acceptor is E168. Residues G174, S213, and 234–235 each bind substrate; that span reads GG.

It belongs to the triosephosphate isomerase family. Homodimer.

It localises to the cytoplasm. The catalysed reaction is D-glyceraldehyde 3-phosphate = dihydroxyacetone phosphate. Its pathway is carbohydrate biosynthesis; gluconeogenesis. It participates in carbohydrate degradation; glycolysis; D-glyceraldehyde 3-phosphate from glycerone phosphate: step 1/1. Functionally, involved in the gluconeogenesis. Catalyzes stereospecifically the conversion of dihydroxyacetone phosphate (DHAP) to D-glyceraldehyde-3-phosphate (G3P). In Acidithiobacillus ferrooxidans (strain ATCC 23270 / DSM 14882 / CIP 104768 / NCIMB 8455) (Ferrobacillus ferrooxidans (strain ATCC 23270)), this protein is Triosephosphate isomerase.